The primary structure comprises 288 residues: Fibroblast growth factor 2 (288 aa).

A disordered region spans residues 1–133; the sequence is MVGVGGGDVE…RGSRPGPAGT (133 aa). The propeptide at 1-142 is or 93, or 124, or 125, or 131, or 161; the sequence is MVGVGGGDVE…TMAAGSITTL (142 aa). Residues 52–64 are compositionally biased toward low complexity; the sequence is SVNPRSRAAGSPR. The segment covering 68–84 has biased composition (basic and acidic residues); the sequence is RRTEERPSGSRLGDRGR. Residues arginine 108, arginine 110, and arginine 112 each carry the omega-N-methylarginine; alternate modification. Symmetric dimethylarginine; alternate is present on residues arginine 108, arginine 110, and arginine 112. The span at 113 to 132 shows a compositional bias: low complexity; it reads GTAAPRAAPAARGSRPGPAG. Asparagine 169 lines the heparin pocket. The short motif at 179–181 is the Cell attachment site; atypical element; that stretch reads DGR. Tyrosine 215 carries the post-translational modification Phosphotyrosine; by TEC. The short motif at 221–223 is the Cell attachment site; atypical element; it reads DGR. Residue lysine 228 forms a Glycyl lysine isopeptide (Lys-Gly) (interchain with G-Cter in SUMO1) linkage. Residues 261–277 are heparin-binding; that stretch reads KRTGQYKLGSKTGPGQK.

This sequence belongs to the heparin-binding growth factors family. As to quaternary structure, monomer. Homodimer. Interacts with FGFR1, FGFR2, FGFR3 and FGFR4. Affinity between fibroblast growth factors (FGFs) and their receptors is increased by heparan sulfate glycosaminoglycans that function as coreceptors. Interacts with CSPG4, FGFBP1 and TEC. Found in a complex with FGFBP1, FGF1 and FGF2. Interacts with FGFBP3. Interacts with integrin ITGAV:ITGB3; the interaction is required for FGF2 signaling. Interacts with SNORC (via the extracellular domain). Interacts with glypican GPC3. Post-translationally, phosphorylation at Tyr-215 regulates FGF2 unconventional secretion. In terms of processing, several N-termini starting at positions 94, 125, 126, 132, 143 and 162 have been identified by direct sequencing. In terms of tissue distribution, expressed in granulosa and cumulus cells. Expressed in hepatocellular carcinoma cells, but not in non-cancerous liver tissue.

It is found in the secreted. The protein resides in the nucleus. In terms of biological role, acts as a ligand for FGFR1, FGFR2, FGFR3 and FGFR4. Also acts as an integrin ligand which is required for FGF2 signaling. Binds to integrin ITGAV:ITGB3. Plays an important role in the regulation of cell survival, cell division, cell differentiation and cell migration. Functions as a potent mitogen in vitro. Can induce angiogenesis. Mediates phosphorylation of ERK1/2 and thereby promotes retinal lens fiber differentiation. The chain is Fibroblast growth factor 2 (FGF2) from Homo sapiens (Human).